The sequence spans 753 residues: Lysyl oxidase homolog 3 (753 aa).

The first 25 residues, 1-25 (MRPVSVWQWSPWGLLLCLLCSSCLG), serve as a signal peptide directing secretion. SRCR domains are found at residues 44–145 (FRLA…VICK) and 169–282 (VRIR…VSCV). 6 disulfide bridges follow: cysteine 70–cysteine 134, cysteine 83–cysteine 144, cysteine 114–cysteine 124, cysteine 201–cysteine 271, cysteine 214–cysteine 281, and cysteine 248–cysteine 258. N-linked (GlcNAc...) asparagine glycosylation occurs at asparagine 111. The N-linked (GlcNAc...) asparagine glycan is linked to asparagine 266. A compositionally biased stretch (low complexity) spans 290–302 (SSGQKKQQQSKPQ). The tract at residues 290 to 315 (SSGQKKQQQSKPQGEARVRLKGGAHP) is disordered. SRCR domains are found at residues 307 to 407 (VRLK…VRCN) and 417 to 525 (IRLS…VICS). Disulfide bonds link cysteine 332–cysteine 396, cysteine 345–cysteine 406, cysteine 376–cysteine 386, cysteine 446–cysteine 511, cysteine 459–cysteine 524, cysteine 492–cysteine 502, cysteine 554–cysteine 560, cysteine 606–cysteine 654, cysteine 638–cysteine 644, cysteine 666–cysteine 676, and cysteine 713–cysteine 727. N-linked (GlcNAc...) asparagine glycans are attached at residues asparagine 390 and asparagine 481. The lysyl-oxidase like stretch occupies residues 529–732 (SDLLLHSALV…WVHNCHIGDA (204 aa)). Histidine 607, histidine 609, and histidine 611 together coordinate Cu cation. N-linked (GlcNAc...) asparagine glycosylation is present at asparagine 625. A cross-link (lysine tyrosylquinone (Lys-Tyr)) is located at residues 634-670 (KASFCLEDTECQEDVSKRYECANFGEQGITVGCWDLY). Tyrosine 670 bears the 2',4',5'-topaquinone mark.

The protein belongs to the lysyl oxidase family. Interacts with STAT3. It depends on Cu cation as a cofactor. Lysine tyrosylquinone residue serves as cofactor. Post-translationally, the lysine tyrosylquinone cross-link (LTQ) is generated by condensation of the epsilon-amino group of a lysine with a topaquinone produced by oxidation of tyrosine. Isoform 1: Predominantly detected in the heart, placenta, lung, and small intestine. Isoform 2: Highly detected in the kidney, pancreas, spleen, and thymus, and is absent in lung. In eye, present in all layers of corneas as well as in the limbus and conjunctiva (at protein level).

The protein localises to the secreted. Its subcellular location is the extracellular space. It localises to the cytoplasm. The protein resides in the nucleus. It carries out the reaction L-lysyl-[protein] + O2 + H2O = (S)-2-amino-6-oxohexanoyl-[protein] + H2O2 + NH4(+). The enzyme catalyses N(6)-acetyl-L-lysyl-[protein] + O2 + H2O = acetamide + (S)-2-amino-6-oxohexanoyl-[protein] + H2O2. In terms of biological role, protein-lysine 6-oxidase that mediates the oxidation of peptidyl lysine residues to allysine in target proteins. Catalyzes the post-translational oxidative deamination of peptidyl lysine residues in precursors of elastin and different types of collagens, a prerequisite in the formation of cross-links between collagens and elastin. Required for somite boundary formation by catalyzing oxidation of fibronectin (FN1), enhancing integrin signaling in myofibers and their adhesion to the myotendinous junction (MTJ). Acts as a regulator of inflammatory response by inhibiting differentiation of naive CD4(+) T-cells into T-helper Th17 or regulatory T-cells (Treg): acts by interacting with STAT3 in the nucleus and catalyzing both deacetylation and oxidation of lysine residues on STAT3, leading to disrupt STAT3 dimerization and inhibit STAT3 transcription activity. Oxidation of lysine residues to allysine on STAT3 preferentially takes place on lysine residues that are acetylated. Also able to catalyze deacetylation of lysine residues on STAT3. Shows protein-lysine 6-oxidase activity toward elastin and different types of collagens, with the highest activity toward collagen type VIII. Functionally, shows protein-lysine 6-oxidase activity toward elastin and different types of collagens, with the highest activity toward collagen type IV. This Homo sapiens (Human) protein is Lysyl oxidase homolog 3.